The following is a 696-amino-acid chain: MLVDDKITVIVPVYNVENYLRKCLDSIITQTYKNIEIVVVNDGSTDASGEICKEFSEMDHRILYIEQENAGLSAARNTGLNNMSGNYVTFVDSDDWIEQDYVETLYKKIVEYQADIAVGNYYSFNESEGMFYFHILGDSYYEKVYDNVSIFENLYETQEMKSFALISAWGKLYKARLFEQLRFDIGKLGEDGYLNQKVYLLSEKVIYLNKSLYAYRIRKGSLSRVWTEKWMHALVDAMSERITLLANMGYPLEKHLAVYRQMLEVSLANGQASGLSDTATYKEFEMKQRLLNQLSRQEESEKKAIVLAANYGYVDQVLTTIKSICYHNRSIRFYLIHSDFPNEWIKQLNKRLEKFDSEIINCRVTSEQISCYKSDISYTVFLRYFIADFVQEDKALYLDCDLVVTKNLDDLFATDLQDYPLAAVRDFGGRAYFGQEIFNAGVLLVNNAFWKKENMTQKLIDVTNEWHDKVDQADQSILNMLFEHKWLELDFDYNHIVIHKQFADYQLPEGQDYPAIIHYLSHRKPWKDLAAQTYREVWWYYHGLEWTELGQNHHLHPLQRSHIYPIKEPFTCLIYTASDHIEQIETLVQSLPDIQFKIAARVIVSDRLAQMTIYPNVTIFNGIHYLVDVDNELVETSQVLLDINHGEKTEEILDQFANLGKPILSFENTKTYEVGQEAYAVDQVQAMIEKLREISK.

Residues 1 to 301 are GT2 domain; that stretch reads MLVDDKITVI…NQLSRQEESE (301 aa). A GT8 domain region spans residues 302-556; sequence KKAIVLAANY…TELGQNHHLH (255 aa). UDP contacts are provided by residues 308–313 and 399–400; these read AANYGY and DC. Residues aspartate 399, aspartate 401, and histidine 518 each contribute to the Mn(2+) site. 518-524 provides a ligand contact to UDP; sequence HYLSHRK.

This sequence in the N-terminal section; belongs to the glycosyltransferase 2 family. It in the central section; belongs to the glycosyltransferase 8 family.

The protein operates within protein modification; protein glycosylation. In terms of biological role, involved in the polymorphic O-glycosylation of the serine-rich repeat protein PsrP. Catalyzes the fourth step in glycosylation of PsrP in this bacteria. Can transfer the sugar from UDP-galactose to the terminal sugar moiety of PsrP-GlcNAc-Glc-Gal or of PsrP-GlcNAc-Glc-Glc (using truncated substrates with the PsrP SSR1 domain). Has hydrolytic activity against UDP-galactose and to a lesser extent against UDP-glucose. The chain is Glycosyltransferase GlyA from Streptococcus pneumoniae serotype 4 (strain ATCC BAA-334 / TIGR4).